The sequence spans 379 residues: UDP-4-amino-4-deoxy-L-arabinose--oxoglutarate aminotransferase (379 aa).

Lys-182 carries the N6-(pyridoxal phosphate)lysine modification.

This sequence belongs to the DegT/DnrJ/EryC1 family. ArnB subfamily. In terms of assembly, homodimer. The cofactor is pyridoxal 5'-phosphate.

It catalyses the reaction UDP-4-amino-4-deoxy-beta-L-arabinose + 2-oxoglutarate = UDP-beta-L-threo-pentopyranos-4-ulose + L-glutamate. The protein operates within nucleotide-sugar biosynthesis; UDP-4-deoxy-4-formamido-beta-L-arabinose biosynthesis; UDP-4-deoxy-4-formamido-beta-L-arabinose from UDP-alpha-D-glucuronate: step 2/3. It functions in the pathway bacterial outer membrane biogenesis; lipopolysaccharide biosynthesis. Functionally, catalyzes the conversion of UDP-4-keto-arabinose (UDP-Ara4O) to UDP-4-amino-4-deoxy-L-arabinose (UDP-L-Ara4N). The modified arabinose is attached to lipid A and is required for resistance to polymyxin and cationic antimicrobial peptides. The sequence is that of UDP-4-amino-4-deoxy-L-arabinose--oxoglutarate aminotransferase from Salmonella choleraesuis (strain SC-B67).